The sequence spans 769 residues: Discoidin, CUB and LCCL domain-containing protein 2 (769 aa).

Positions 1–29 are enriched in low complexity; the sequence is MASRAPLRAARSPQDPGGRAAPAATGRAP. Residues 1-39 are disordered; the sequence is MASRAPLRAARSPQDPGGRAAPAATGRAPLPSAGWCPLP. The first 63 residues, 1 to 63, serve as a signal peptide directing secretion; the sequence is MASRAPLRAA…LLLLLPDAGA (63 aa). Over 64–523 the chain is Extracellular; sequence QKGDGCGHTV…VTPSVTKDVA (460 aa). Cystine bridges form between C69/C96 and C123/C145. The CUB domain maps to 69-184; that stretch reads CGHTVLGPES…RGFLASYSVI (116 aa). N92 carries N-linked (GlcNAc...) asparagine glycosylation. N152 carries an N-linked (GlcNAc...) asparagine glycan. Residues 184–282 form the LCCL domain; sequence IDKQDLITCL…MVGYLSTSLF (99 aa). C212 and C234 are joined by a disulfide. Residue N269 is glycosylated (N-linked (GlcNAc...) asparagine). A disulfide bond links C289 and C446. In terms of domain architecture, F5/8 type C spans 289–446; the sequence is CYGTLGMESG…IAMKVELLGC (158 aa). Residues 455-476 are disordered; the sequence is PKLTQPPPPRNSNNLKNTTVHP. The segment covering 465-474 has biased composition (polar residues); sequence NSNNLKNTTV. N471 and N511 each carry an N-linked (GlcNAc...) asparagine glycan. Residues 524-544 traverse the membrane as a helical segment; it reads LAAVLVPVLVMALTTLILILV. Over 545–769 the chain is Cytoplasmic; it reads CAWHWRNRKK…EKFDAFKETL (225 aa). Residue S601 is modified to Phosphoserine. The interval 719-769 is disordered; it reads SCSSGQAQYDTPKGGKPAAAPEELVYQVPQSTQEASGAGRDEKFDAFKETL. Residues 757-769 are compositionally biased toward basic and acidic residues; that stretch reads GRDEKFDAFKETL.

Its subcellular location is the membrane. The protein is Discoidin, CUB and LCCL domain-containing protein 2 (Dcbld2) of Rattus norvegicus (Rat).